A 316-amino-acid chain; its full sequence is Melanocyte-stimulating hormone receptor (316 aa).

The Extracellular portion of the chain corresponds to 1–37 (MPMQGAHRKLLGSLNSTPTATSNLGLAANHTGAPCLE). N29 carries an N-linked (GlcNAc...) asparagine glycan. A helical membrane pass occupies residues 38–63 (VSIPDGLFLSLGLVSLVENVLVVAAI). Residues 64 to 72 (AKNRNLHSS) are Cytoplasmic-facing. A helical transmembrane segment spans residues 73 to 93 (MYCFICCLALSDLLVSGSNML). The Extracellular portion of the chain corresponds to 94 to 118 (ETAVILLLEAGALATRTSVVQQLHN). The chain crosses the membrane as a helical span at residues 119-140 (TIDVLTCSSMLCSLCFLGAIAV). Residues 141–163 (DRYISIFYALRYHSIMTLPRAQR) lie on the Cytoplasmic side of the membrane. The chain crosses the membrane as a helical span at residues 164–183 (AIAAIWVASVLSSTLFITYY). The Extracellular segment spans residues 184-191 (DHAAVLLC). The helical transmembrane segment at 192–211 (LVVFFLAMLVLMAVLYVHML) threads the bilayer. The Cytoplasmic segment spans residues 212 to 240 (ARACQHAHGIIRLHKRQSPAHQGFGLRGA). A helical membrane pass occupies residues 241 to 266 (ATLTILLGIFFLCWGPFFLHLTLVVF). The Extracellular portion of the chain corresponds to 267 to 279 (CPQHLTCSCIFKN). Residues 280–300 (FKVFLTLIICNTIIDPLIYAF) form a helical membrane-spanning segment. The Cytoplasmic portion of the chain corresponds to 301 to 316 (RSQELRRTLKEVLCSW). Residue C314 is the site of S-palmitoyl cysteine attachment.

The protein belongs to the G-protein coupled receptor 1 family. As to quaternary structure, interacts with MGRN1, but does not undergo MGRN1-mediated ubiquitination; this interaction competes with GNAS-binding and thus inhibits agonist-induced cAMP production. Interacts with OPN3; the interaction results in a decrease in MC1R-mediated cAMP signaling and ultimately a decrease in melanin production in melanocytes.

It localises to the cell membrane. Functionally, receptor for MSH (alpha, beta and gamma) and ACTH. The activity of this receptor is mediated by G proteins which activate adenylate cyclase. Mediates melanogenesis, the production of eumelanin (black/brown) and phaeomelanin (red/yellow), via regulation of cAMP signaling in melanocytes. In Leontocebus fuscicollis (Brown-mantled tamarin), this protein is Melanocyte-stimulating hormone receptor (MC1R).